The chain runs to 351 residues: Holliday junction branch migration complex subunit RuvB (351 aa).

Residues 1-22 (MSDPKANRMVSPERRSDDVGDT) are disordered. The tract at residues 2–185 (SDPKANRMVS…FGIPVRLNFY (184 aa)) is large ATPase domain (RuvB-L). Residues leucine 24, arginine 25, glycine 66, lysine 69, threonine 70, threonine 71, 132–134 (EDF), arginine 175, tyrosine 185, and arginine 222 each bind ATP. Threonine 70 contacts Mg(2+). Positions 186–256 (TIEELESIVS…IADHALSALE (71 aa)) are small ATPAse domain (RuvB-S). Positions 259-351 (AAGLDAMDRR…GLFGTDESDD (93 aa)) are head domain (RuvB-H). DNA contacts are provided by arginine 295, arginine 314, and arginine 319.

It belongs to the RuvB family. As to quaternary structure, homohexamer. Forms an RuvA(8)-RuvB(12)-Holliday junction (HJ) complex. HJ DNA is sandwiched between 2 RuvA tetramers; dsDNA enters through RuvA and exits via RuvB. An RuvB hexamer assembles on each DNA strand where it exits the tetramer. Each RuvB hexamer is contacted by two RuvA subunits (via domain III) on 2 adjacent RuvB subunits; this complex drives branch migration. In the full resolvosome a probable DNA-RuvA(4)-RuvB(12)-RuvC(2) complex forms which resolves the HJ.

It is found in the cytoplasm. It carries out the reaction ATP + H2O = ADP + phosphate + H(+). Its function is as follows. The RuvA-RuvB-RuvC complex processes Holliday junction (HJ) DNA during genetic recombination and DNA repair, while the RuvA-RuvB complex plays an important role in the rescue of blocked DNA replication forks via replication fork reversal (RFR). RuvA specifically binds to HJ cruciform DNA, conferring on it an open structure. The RuvB hexamer acts as an ATP-dependent pump, pulling dsDNA into and through the RuvAB complex. RuvB forms 2 homohexamers on either side of HJ DNA bound by 1 or 2 RuvA tetramers; 4 subunits per hexamer contact DNA at a time. Coordinated motions by a converter formed by DNA-disengaged RuvB subunits stimulates ATP hydrolysis and nucleotide exchange. Immobilization of the converter enables RuvB to convert the ATP-contained energy into a lever motion, pulling 2 nucleotides of DNA out of the RuvA tetramer per ATP hydrolyzed, thus driving DNA branch migration. The RuvB motors rotate together with the DNA substrate, which together with the progressing nucleotide cycle form the mechanistic basis for DNA recombination by continuous HJ branch migration. Branch migration allows RuvC to scan DNA until it finds its consensus sequence, where it cleaves and resolves cruciform DNA. This Bradyrhizobium diazoefficiens (strain JCM 10833 / BCRC 13528 / IAM 13628 / NBRC 14792 / USDA 110) protein is Holliday junction branch migration complex subunit RuvB.